The chain runs to 221 residues: Glutathione S-transferase A3 (221 aa).

Alanine 2 is modified (N-acetylalanine). Residues 3-83 enclose the GST N-terminal domain; that stretch reads GKPVLHYFDG…YIASKYNLYG (81 aa). Lysine 4 is subject to N6-succinyllysine. Residues tyrosine 9, arginine 45, 54-55, and 67-68 contribute to the glutathione site; these read QV and QT. The region spanning 85–207 is the GST C-terminal domain; sequence DMKERAIIDM…LQPGSQRKPF (123 aa).

In terms of assembly, homodimer.

Its subcellular location is the cytoplasm. The enzyme catalyses RX + glutathione = an S-substituted glutathione + a halide anion + H(+). It carries out the reaction androst-5-ene-3,17-dione = androst-4-ene-3,17-dione. The catalysed reaction is pregn-5-ene-3,20-dione = progesterone. Conjugation of reduced glutathione to a wide number of exogenous and endogenous hydrophobic electrophiles. Catalyzes isomerization reactions that contribute to the biosynthesis of steroid hormones. Efficiently catalyze obligatory double-bond isomerizations of delta(5)-androstene-3,17-dione and delta(5)-pregnene-3,20-dione, precursors to testosterone and progesterone, respectively. Has a high catalytic activity for aflatoxin B1-8,9 epoxide. The protein is Glutathione S-transferase A3 of Mus musculus (Mouse).